A 280-amino-acid chain; its full sequence is Four and a half LIM domains protein 3 (280 aa).

N-acetylserine is present on S2. The segment at 7–31 (CAKCNESLYGRKYIQTDSGPYCVPC) adopts a C4-type zinc-finger fold. 2 LIM zinc-binding domains span residues 40-92 (CAEC…CNDC) and 101-153 (CSAC…CVPC). K157 carries the post-translational modification N6-acetyllysine. LIM zinc-binding domains are found at residues 162 to 212 (CARC…CVAC) and 221 to 275 (CSSC…CQGC). K235 is modified (N6-acetyllysine).

Interacts with SOX15; the interaction recruits FHL3 to FOXK1 promoters where it acts as a transcriptional coactivator of FOXK1. In terms of tissue distribution, expressed only in skeletal muscle.

It is found in the nucleus. Its subcellular location is the cytoplasm. Its function is as follows. Recruited by SOX15 to FOXK1 promoters where it acts as a transcriptional coactivator of FOXK1. This Homo sapiens (Human) protein is Four and a half LIM domains protein 3 (FHL3).